The primary structure comprises 981 residues: Translation initiation factor IF-2 (981 aa).

The tract at residues 31-370 is disordered; it reads FVKSASSTVE…SKRAKRAEYE (340 aa). The segment covering 64–87 has biased composition (low complexity); that stretch reads GAAAPAARPAAKPGAPSPSAAKPG. Positions 88–111 are enriched in pro residues; that stretch reads GPRPGPKPAAPAPAAPAAPAPAAP. Residues 112-121 show a composition bias toward low complexity; that stretch reads AAPAAAAPAA. A compositionally biased stretch (pro residues) spans 136-145; that stretch reads PAQPARPAPA. Positions 146–165 are enriched in low complexity; that stretch reads APAASAPAAPAAPAAPSTGA. Pro residues predominate over residues 256-269; the sequence is RPSPGSMPPRPNPG. Low complexity predominate over residues 270 to 279; that stretch reads AMPARSARPA. Gly residues predominate over residues 280 to 339; that stretch reads PGGGGRPGRPGGAPGGRPGGGGGGYRGGGAPGAGAGAGAPGGAAPAGGFRGRPGGGGRPG. A compositionally biased stretch (basic residues) spans 356-365; sequence RRGRKSKRAK. The region spanning 477–649 is the tr-type G domain; sequence SRPPVVTVMG…VLLTADASLD (173 aa). The segment at 486 to 493 is G1; the sequence is GHVDHGKT. 486–493 serves as a coordination point for GTP; that stretch reads GHVDHGKT. The segment at 511-515 is G2; the sequence is GITQH. Residues 536–539 are G3; that stretch reads DTPG. GTP contacts are provided by residues 536 to 540 and 590 to 593; these read DTPGH and NKID. The G4 stretch occupies residues 590–593; the sequence is NKID. The interval 626–628 is G5; it reads SAK.

It belongs to the TRAFAC class translation factor GTPase superfamily. Classic translation factor GTPase family. IF-2 subfamily.

Its subcellular location is the cytoplasm. In terms of biological role, one of the essential components for the initiation of protein synthesis. Protects formylmethionyl-tRNA from spontaneous hydrolysis and promotes its binding to the 30S ribosomal subunits. Also involved in the hydrolysis of GTP during the formation of the 70S ribosomal complex. The polypeptide is Translation initiation factor IF-2 (Rhodococcus erythropolis (strain PR4 / NBRC 100887)).